Consider the following 426-residue polypeptide: Serine hydroxymethyltransferase (426 aa).

(6S)-5,6,7,8-tetrahydrofolate is bound by residues L113 and 117 to 119 (GHL). Residue K222 is modified to N6-(pyridoxal phosphate)lysine. Position 363-365 (363-365 (SAF)) interacts with (6S)-5,6,7,8-tetrahydrofolate.

The protein belongs to the SHMT family. In terms of assembly, homodimer. It depends on pyridoxal 5'-phosphate as a cofactor.

It localises to the cytoplasm. The enzyme catalyses (6R)-5,10-methylene-5,6,7,8-tetrahydrofolate + glycine + H2O = (6S)-5,6,7,8-tetrahydrofolate + L-serine. The protein operates within one-carbon metabolism; tetrahydrofolate interconversion. Its pathway is amino-acid biosynthesis; glycine biosynthesis; glycine from L-serine: step 1/1. In terms of biological role, catalyzes the reversible interconversion of serine and glycine with tetrahydrofolate (THF) serving as the one-carbon carrier. This reaction serves as the major source of one-carbon groups required for the biosynthesis of purines, thymidylate, methionine, and other important biomolecules. Also exhibits THF-independent aldolase activity toward beta-hydroxyamino acids, producing glycine and aldehydes, via a retro-aldol mechanism. This is Serine hydroxymethyltransferase from Porphyromonas gingivalis (strain ATCC 33277 / DSM 20709 / CIP 103683 / JCM 12257 / NCTC 11834 / 2561).